We begin with the raw amino-acid sequence, 193 residues long: MAFELPDLPYKLNALEPHISQETLEYHHGKHHRAYVNKLNKLIEGTPFEKEPLEEIIRKSDGGIFNNAAQHWNHTFYWHCMSPDGGGDPSGELASAIDKTFGSLEKFKALFTDSANNHFGSGWAWLVKDNNGKLEVLSTVNARNPMTEGKKPLMTCDVWEHAYYIDTRNDRPKYVNNFWQVVNWDFVMKNFKS.

Histidine 27, histidine 74, aspartate 157, and histidine 161 together coordinate Fe cation.

This sequence belongs to the iron/manganese superoxide dismutase family. In terms of assembly, homodimer. The cofactor is Fe cation.

The enzyme catalyses 2 superoxide + 2 H(+) = H2O2 + O2. Its function is as follows. Destroys superoxide anion radicals which are normally produced within the cells and which are toxic to biological systems. This chain is Superoxide dismutase [Fe] (sodB), found in Coxiella burnetii (strain RSA 493 / Nine Mile phase I).